The sequence spans 429 residues: Adenylosuccinate synthetase (429 aa).

GTP contacts are provided by residues Gly12–Lys18 and Gly40–Thr42. The active-site Proton acceptor is Asp13. Mg(2+)-binding residues include Asp13 and Gly40. IMP is bound by residues Asp13 to Lys16, Asn38 to His41, Thr129, Arg143, Gln223, Thr238, and Arg302. His41 (proton donor) is an active-site residue. Residue Thr298–Arg304 participates in substrate binding. GTP contacts are provided by residues Arg304, Lys330–Asp332, and Ser412–Ser414.

Belongs to the adenylosuccinate synthetase family. As to quaternary structure, homodimer. Mg(2+) is required as a cofactor.

It is found in the cytoplasm. It carries out the reaction IMP + L-aspartate + GTP = N(6)-(1,2-dicarboxyethyl)-AMP + GDP + phosphate + 2 H(+). It participates in purine metabolism; AMP biosynthesis via de novo pathway; AMP from IMP: step 1/2. Plays an important role in the de novo pathway of purine nucleotide biosynthesis. Catalyzes the first committed step in the biosynthesis of AMP from IMP. This is Adenylosuccinate synthetase from Gluconobacter oxydans (strain 621H) (Gluconobacter suboxydans).